The chain runs to 215 residues: TLD domain-containing protein 2 (215 aa).

Residues 1–46 (MRGLRWRYTRLPSQVEDTLSGEEGNEEEEEEEAAPDPAAAPEDPTV) form a disordered region. The segment covering 19 to 34 (LSGEEGNEEEEEEEAA) has biased composition (acidic residues). One can recognise a TLDc domain in the interval 54–215 (QVLSASEIRQ…IQELEAWLLS (162 aa)).

This sequence belongs to the OXR1 family.

In Homo sapiens (Human), this protein is TLD domain-containing protein 2 (TLDC2).